Reading from the N-terminus, the 401-residue chain is Cysteine desulfurase (401 aa).

Residues 72-73 (AT), Asn-151, Gln-179, and 199-201 (SAH) contribute to the pyridoxal 5'-phosphate site. N6-(pyridoxal phosphate)lysine is present on Lys-202. Residue Thr-237 participates in pyridoxal 5'-phosphate binding. Residue Cys-324 is the Cysteine persulfide intermediate of the active site. Cys-324 contributes to the [2Fe-2S] cluster binding site.

This sequence belongs to the class-V pyridoxal-phosphate-dependent aminotransferase family. NifS/IscS subfamily. Homodimer. Pyridoxal 5'-phosphate serves as cofactor.

It carries out the reaction (sulfur carrier)-H + L-cysteine = (sulfur carrier)-SH + L-alanine. Functionally, catalyzes the removal of elemental sulfur atoms from cysteine to produce alanine. Seems to participate in the biosynthesis of the nitrogenase metalloclusters by providing the inorganic sulfur required for the Fe-S core formation. This chain is Cysteine desulfurase, found in Enterobacter agglomerans (Erwinia herbicola).